The primary structure comprises 212 residues: Cyclin-P4-1 (212 aa).

The protein belongs to the cyclin family. Cyclin U/P subfamily.

This is Cyclin-P4-1 (CYCP4-1) from Oryza sativa subsp. japonica (Rice).